Here is a 92-residue protein sequence, read N- to C-terminus: Large ribosomal subunit protein bL25 (92 aa).

It belongs to the bacterial ribosomal protein bL25 family. Part of the 50S ribosomal subunit; part of the 5S rRNA/L5/L18/L25 subcomplex. Contacts the 5S rRNA. Binds to the 5S rRNA independently of L5 and L18.

Functionally, this is one of the proteins that binds to the 5S RNA in the ribosome where it forms part of the central protuberance. The polypeptide is Large ribosomal subunit protein bL25 (Vibrio parahaemolyticus serotype O3:K6 (strain RIMD 2210633)).